The chain runs to 130 residues: Glycine cleavage system H protein (130 aa).

The Lipoyl-binding domain occupies 24-106 (TVTIGITDHA…YDDGWFFKVK (83 aa)). At Lys-65 the chain carries N6-lipoyllysine.

The protein belongs to the GcvH family. In terms of assembly, the glycine cleavage system is composed of four proteins: P, T, L and H. Requires (R)-lipoate as cofactor.

Functionally, the glycine cleavage system catalyzes the degradation of glycine. The H protein shuttles the methylamine group of glycine from the P protein to the T protein. In Saccharophagus degradans (strain 2-40 / ATCC 43961 / DSM 17024), this protein is Glycine cleavage system H protein.